A 285-amino-acid chain; its full sequence is MSTPENMAWPAPAKLNLFLHVNGRRSDGYHELQTLFIFLDHCDWLRFHINNSDLVDIKPALADVPPEQNLIYRAAMLLKQYSTQPLGVMVELDKRLPMGGGIGGGSSDAATTLVALNYLWKINLPVDELAELGRQLGADVPVFVRGHAAFAEGVGEKLLPVEVTQKWYLVLVPECHVSTAEIFRHKDLKRDTPKQNWRELQQGNWHNDCEPLVKKNYPEVEKALRWLIEYAPSRMTGTGACVFAEFKHEHEAREVLALIPTWLRGFVARGENLSPLHVVLQQVYA.

Residue Lys-14 is part of the active site. 97 to 107 (PMGGGIGGGSS) serves as a coordination point for ATP. The active site involves Asp-139.

It belongs to the GHMP kinase family. IspE subfamily.

The catalysed reaction is 4-CDP-2-C-methyl-D-erythritol + ATP = 4-CDP-2-C-methyl-D-erythritol 2-phosphate + ADP + H(+). It participates in isoprenoid biosynthesis; isopentenyl diphosphate biosynthesis via DXP pathway; isopentenyl diphosphate from 1-deoxy-D-xylulose 5-phosphate: step 3/6. Catalyzes the phosphorylation of the position 2 hydroxy group of 4-diphosphocytidyl-2C-methyl-D-erythritol. This is 4-diphosphocytidyl-2-C-methyl-D-erythritol kinase from Tolumonas auensis (strain DSM 9187 / NBRC 110442 / TA 4).